The primary structure comprises 171 residues: Glycine cleavage system H protein 4 (171 aa).

A Lipoyl-binding domain is found at 30–112 (FAEVGITDYA…YEAGWIAVIE (83 aa)). At Lys71 the chain carries N6-lipoyllysine. Residues 139–171 (EKEEEVEVKEEELIETESIEELSEEELGYEENK) form a disordered region.

This sequence belongs to the GcvH family. In terms of assembly, the glycine cleavage system is composed of four proteins: P, T, L and H. (R)-lipoate is required as a cofactor.

In terms of biological role, the glycine cleavage system catalyzes the degradation of glycine. The H protein shuttles the methylamine group of glycine from the P protein to the T protein. This Aquifex aeolicus (strain VF5) protein is Glycine cleavage system H protein 4.